The chain runs to 103 residues: Large ribosomal subunit protein bL21 (103 aa).

Residues 83–92 (YRRKKGHRQP) show a composition bias toward basic residues. Residues 83-103 (YRRKKGHRQPFSRVTVEKIEA) are disordered.

The protein belongs to the bacterial ribosomal protein bL21 family. Part of the 50S ribosomal subunit. Contacts protein L20.

Functionally, this protein binds to 23S rRNA in the presence of protein L20. This is Large ribosomal subunit protein bL21 from Pelotomaculum thermopropionicum (strain DSM 13744 / JCM 10971 / SI).